Consider the following 582-residue polypeptide: Potassium voltage-gated channel subfamily KQT member 1 (582 aa).

Topologically, residues 1-31 (RVSIYSARRPLLARTHIQGRVYNFLERPTGW) are cytoplasmic. A helical membrane pass occupies residues 32–53 (KCFVYHFAVFLIVLVCLIFSVL). Residues 54 to 64 (STIEQYVALAT) lie on the Extracellular side of the membrane. Residues 65–87 (GTLFWMEIVLVVFFGTEYVVRLW) form a helical membrane-spanning segment. Residues 88-103 (SAGCRSKYVGVWGRLR) are Cytoplasmic-facing. Residues 104–129 (FARKPISIIDLIVVLASMVVLCVGSK) form a helical membrane-spanning segment. The Extracellular segment spans residues 130-137 (GQVFATSA). The chain crosses the membrane as a helical; Voltage-sensor span at residues 138 to 153 (IRGIRFLQILRMLHVD). Residues 149 to 157 (MLHVDRQGG) are interaction with KCNE3. The Cytoplasmic segment spans residues 154–171 (RQGGTWRLLGSVVFIHRQ). Q155 provides a ligand contact to a 1,2-diacyl-sn-glycero-3-phospho-(1D-myo-inositol-4,5-bisphosphate). A helical transmembrane segment spans residues 172–194 (ELITTLYIGFLGLIFSSYFVYLA). The Extracellular segment spans residues 195 to 210 (EKDAVNESGQVEFGSY). Residue N200 is glycosylated (N-linked (GlcNAc...) asparagine). The pore-forming intramembrane region spans 211–231 (ADALWWGVVTVTTIGYGDKVP). The Extracellular segment spans residues 232–233 (QT). A helical transmembrane segment spans residues 234 to 259 (WVGKTIASCFSVFAISFFALPAGILG). The Cytoplasmic portion of the chain corresponds to 260 to 582 (SGFALKVQQK…VPRRGPEEGS (323 aa)). Residues 281 to 293 (AAASLIQTAWRCY) form an interaction with CALM region. Residues S318 and S320 each carry the phosphoserine modification. The interaction with CALM; calcium-dependent stretch occupies residues 426-440 (KVIRRMQYFVAKKKF). The segment at 446–483 (PYDVRDVIEQYSQGHLNLMVRIKELQRRLDQSIGKPSL) is interaction with KCNE1 C-terminus. Residues 496–532 (SNTIGARLNRVEDKVAQLDQRLVLITDMLQQLLSLHH) adopt a coiled-coil conformation. Residues 499 to 527 (IGARLNRVEDKVAQLDQRLVLITDMLQQL) form an interaction with AKAP9 region. Residues 500–531 (GARLNRVEDKVAQLDQRLVLITDMLQQLLSLH) are C-terminal assembly domain (tetramerization). Positions 530-582 (LHHGGPPGSRPPSGGGAQVQPCGPTNPELFLPGNALPTYEQLTVPRRGPEEGS) are disordered.

The protein belongs to the potassium channel family. KQT (TC 1.A.1.15) subfamily. Kv7.1/KCNQ1 sub-subfamily. In terms of assembly, tetramer. Heterotetramer with KCNE1; targets to the membrane raft. Interacts (via C-terminus) with CALM; forms a heterooctameric structure (with 4:4 KCNQ1:CALM stoichiometry) in a calcium-independent manner. Interacts with AKAP9; targets protein kinase A (PKA) catalytic and regulatory subunits and protein phosphatase 1 (PP1) to the KCNQ1-KCNE1 complex, allowing PKA-mediated phosphorylation and increase of delayed rectifier potassium channel activity. Interacts with KCNE2; form a heterooligomer complex that targets to the membrane raft and leading to currents with an apparently instantaneous activation, a rapid deactivation process and a linear current-voltage relationship and decreases the amplitude of the outward current. Interacts with AP2M1; mediates estrogen-induced internalization via clathrin-coated vesicles. Interacts with NEDD4L; promotes internalization and decreases I(Ks) currents. Interacts with USP2; counteracts the NEDD4L-specific down-regulation of I(Ks) and restore plasma membrane localization. Heterotetramer with KCNQ5; has a voltage-gated potassium channel activity. Interacts with KCNE3; four KCNE3 molecules are bound to one KCNQ1 tetramer (4:4 KCNQ1:KCNE3 stoichiometry); alters membrane raft localization; affects KCNQ1 structure and gating properties. Interacts with KCNE4; impairs KCNQ1 localization in lipid rafts and inhibits voltage-gated potassium channel activity. Interacts with KCNE5; impairs KCNQ1 localization in lipid rafts and only conducts current upon strong and continued depolarization. Phosphorylated by PKA; increases delayed rectifier potassium channel activity of the KCNQ1-KCNE1 complex through a macromolecular complex that includes PKA, PP1, and the targeting protein AKAP9. Post-translationally, ubiquitinated by NEDD4L; promotes internalization. The ubiquitinylated form is internalized through a clathrin-mediated endocytosis by interacting with AP2M1 and is recycled back to the cell membrane via RAB4A and RAB11A. In terms of processing, deubiquitinated by USP2; counteracts the NEDD4L-specific down-regulation of I(Ks) and restores the membrane localization.

It localises to the cell membrane. The protein resides in the cytoplasmic vesicle membrane. It is found in the early endosome. The protein localises to the membrane raft. Its subcellular location is the endoplasmic reticulum. It localises to the basolateral cell membrane. The catalysed reaction is K(+)(in) = K(+)(out). Its activity is regulated as follows. PIP2 molecule is essential to activate KCNQ channels by inducing the coupling of the voltage-sensing domain (VSD) and the pore-forming domain (PD). Upon channel activation, PIP2 disrupts the VSD-calmodulin/CALM interactions, causing the release of CALM from the VSD which triggers the opening of the gate. Calcium potentiates KCNQ1 channel current through calcium-bound CALM. Calcium-bound CALM competes with PIP2 to stabilize the channel open state. In terms of biological role, pore-forming subunit of the voltage-gated potassium (Kv) channel involved in the regulation of cardiomyocyte excitability and important in normal development and functions of myocardium, inner ear, stomach and colon. Associates with KCNE beta subunits that modulates current kinetics. Induces a voltage-dependent by rapidly activating and slowly deactivating potassium-selective outward current. Also promotes a delayed voltage activated potassium current showing outward rectification characteristic. During beta-adrenergic receptor stimulation participates in cardiac repolarization by associating with KCNE1 to form the I(Ks) cardiac potassium current that increases the amplitude and slows down the activation kinetics of outward potassium current I(Ks). Muscarinic agonist oxotremorine-M strongly suppresses KCNQ1/KCNE1 current. When associated with KCNE3, forms the potassium channel that is important for cyclic AMP-stimulated intestinal secretion of chloride ions. This interaction with KCNE3 is reduced by 17beta-estradiol, resulting in the reduction of currents. During conditions of increased substrate load, maintains the driving force for proximal tubular and intestinal sodium ions absorption, gastric acid secretion, and cAMP-induced jejunal chloride ions secretion. Allows the provision of potassium ions to the luminal membrane of the secretory canaliculus in the resting state as well as during stimulated acid secretion. When associated with KCNE2, forms a heterooligomer complex leading to currents with an apparently instantaneous activation, a rapid deactivation process and a linear current-voltage relationship and decreases the amplitude of the outward current. When associated with KCNE4, inhibits voltage-gated potassium channel activity. When associated with KCNE5, this complex only conducts current upon strong and continued depolarization. Also forms a heterotetramer with KCNQ5 that has a voltage-gated potassium channel activity. Binds with phosphatidylinositol 4,5-bisphosphate. The sequence is that of Potassium voltage-gated channel subfamily KQT member 1 from Felis catus (Cat).